We begin with the raw amino-acid sequence, 345 residues long: Histidinol-phosphate aminotransferase (345 aa).

Lysine 206 carries the N6-(pyridoxal phosphate)lysine modification.

It belongs to the class-II pyridoxal-phosphate-dependent aminotransferase family. Histidinol-phosphate aminotransferase subfamily. As to quaternary structure, homodimer. Pyridoxal 5'-phosphate serves as cofactor.

The catalysed reaction is L-histidinol phosphate + 2-oxoglutarate = 3-(imidazol-4-yl)-2-oxopropyl phosphate + L-glutamate. Its pathway is amino-acid biosynthesis; L-histidine biosynthesis; L-histidine from 5-phospho-alpha-D-ribose 1-diphosphate: step 7/9. The chain is Histidinol-phosphate aminotransferase from Bacteroides fragilis (strain ATCC 25285 / DSM 2151 / CCUG 4856 / JCM 11019 / LMG 10263 / NCTC 9343 / Onslow / VPI 2553 / EN-2).